A 224-amino-acid polypeptide reads, in one-letter code: Pyridoxal 5'-phosphate synthase subunit PdxT (224 aa).

55-57 (GES) is an L-glutamine binding site. The active-site Nucleophile is C87. L-glutamine contacts are provided by residues R113 and 142-143 (IR). Catalysis depends on charge relay system residues H178 and E180.

The protein belongs to the glutaminase PdxT/SNO family. In the presence of PdxS, forms a dodecamer of heterodimers. Only shows activity in the heterodimer.

The catalysed reaction is aldehydo-D-ribose 5-phosphate + D-glyceraldehyde 3-phosphate + L-glutamine = pyridoxal 5'-phosphate + L-glutamate + phosphate + 3 H2O + H(+). It catalyses the reaction L-glutamine + H2O = L-glutamate + NH4(+). Its pathway is cofactor biosynthesis; pyridoxal 5'-phosphate biosynthesis. Functionally, catalyzes the hydrolysis of glutamine to glutamate and ammonia as part of the biosynthesis of pyridoxal 5'-phosphate. The resulting ammonia molecule is channeled to the active site of PdxS. This chain is Pyridoxal 5'-phosphate synthase subunit PdxT, found in Syntrophus aciditrophicus (strain SB).